The primary structure comprises 727 residues: NADH-ubiquinone oxidoreductase 75 kDa subunit, mitochondrial (727 aa).

Residues 1–23 (MLRIPIKRALIGLSNSPKGYVRT) constitute a mitochondrion transit peptide. Positions 30-108 (NLIEVFVDGQ…GWNILTNSEK (79 aa)) constitute a 2Fe-2S ferredoxin-type domain. 3 residues coordinate [2Fe-2S] cluster: cysteine 64, cysteine 75, and cysteine 78. Lysine 84 is modified (N6-acetyllysine). Cysteine 92 lines the [2Fe-2S] cluster pocket. The 40-residue stretch at 108-147 (KSKKAREGVMEFLLANHPLDCPICDQGGECDLQDQSMMFG) folds into the 4Fe-4S His(Cys)3-ligated-type domain. Histidine 124, cysteine 128, cysteine 131, cysteine 137, cysteine 176, cysteine 179, cysteine 182, and cysteine 226 together coordinate [4Fe-4S] cluster. Positions 245-301 (TRKTESIDVMDAVGSNIVVSTRTGEVMRILPRMHEDINEEWISDKTRFAYDGLKRQR) constitute a 4Fe-4S Mo/W bis-MGD-type domain. Residue serine 461 is modified to Phosphoserine. 3 positions are modified to N6-acetyllysine: lysine 467, lysine 499, and lysine 709.

It belongs to the complex I 75 kDa subunit family. Core subunit of respiratory chain NADH dehydrogenase (Complex I) which is composed of 45 different subunits. This is the largest subunit of complex I and it is a component of the iron-sulfur (IP) fragment of the enzyme. Complex I associates with ubiquinol-cytochrome reductase complex (Complex III) to form supercomplexes. In astrocytes, less complex I is assembled into supercomplexes as compared to neurons. Interacts with MDM2. Interacts with AKAP1. Requires [2Fe-2S] cluster as cofactor. [4Fe-4S] cluster is required as a cofactor. Post-translationally, acetylation of Lys-84 is observed in liver mitochondria from fasted mice but not from fed mice. Brain. More abundant in neurons than in astrocytes (at protein level).

Its subcellular location is the mitochondrion inner membrane. It carries out the reaction a ubiquinone + NADH + 5 H(+)(in) = a ubiquinol + NAD(+) + 4 H(+)(out). Functionally, core subunit of the mitochondrial membrane respiratory chain NADH dehydrogenase (Complex I) which catalyzes electron transfer from NADH through the respiratory chain, using ubiquinone as an electron acceptor. Essential for catalysing the entry and efficient transfer of electrons within complex I. Plays a key role in the assembly and stability of complex I and participates in the association of complex I with ubiquinol-cytochrome reductase complex (Complex III) to form supercomplexes. In Mus musculus (Mouse), this protein is NADH-ubiquinone oxidoreductase 75 kDa subunit, mitochondrial (Ndufs1).